The sequence spans 292 residues: Undecaprenyl-diphosphatase (292 aa).

7 helical membrane passes run 1 to 21 (MSLV…FLPV), 46 to 66 (FVTI…RADI), 90 to 110 (LGWY…LLEH), 114 to 134 (ALGN…LLAA), 192 to 212 (FLLS…STVP), 225 to 245 (VVGT…LLAW), and 253 to 273 (VFVV…LSGV).

This sequence belongs to the UppP family.

Its subcellular location is the cell inner membrane. The catalysed reaction is di-trans,octa-cis-undecaprenyl diphosphate + H2O = di-trans,octa-cis-undecaprenyl phosphate + phosphate + H(+). Its function is as follows. Catalyzes the dephosphorylation of undecaprenyl diphosphate (UPP). Confers resistance to bacitracin. The sequence is that of Undecaprenyl-diphosphatase from Anaeromyxobacter sp. (strain K).